Consider the following 486-residue polypeptide: HTH-type transcriptional regulator PrpR (486 aa).

The region spanning 22-76 is the HTH cro/C1-type domain; that stretch reads LRRLRQERGLTQVALAKALDLSTSYVNQLENDQRPITVPVLLLLTERFDLSAQYF. Residues 33–52 constitute a DNA-binding region (H-T-H motif); it reads QVALAKALDLSTSYVNQLEN.

This sequence belongs to the short-chain fatty acyl-CoA assimilation regulator (ScfR) family.

It participates in organic acid metabolism; propanoate degradation. Its pathway is steroid metabolism; cholesterol metabolism. In terms of biological role, plays a key role in regulating expression of enzymes involved in the catabolism of short chain fatty acids (SCFA) via both the glyoxylate (acetyl degradation route) and the methylcitrate cycle (propionate degradation route). Required for intracellular growth in macrophages and for the assimilation of cholesterol-derived propionate. PrpR acts as a transcriptional activator of prpDC and icl genes when propionate is the main carbon source, and as a ramB repressor. During growth on propionate, PrpR also acts as a transcriptional repressor of dnaA, which encodes the DnaA initiator protein responsible for initiating chromosomal replication. It is possibly involved in the regulation of genes responsible for controlling cholesterol utilization. In Mycobacterium tuberculosis (strain ATCC 25618 / H37Rv), this protein is HTH-type transcriptional regulator PrpR.